Consider the following 924-residue polypeptide: Isoleucine--tRNA ligase (924 aa).

Positions 57 to 67 match the 'HIGH' region motif; sequence PYANGDIHMGH. E552 is a binding site for L-isoleucyl-5'-AMP. The 'KMSKS' region signature appears at 593–597; the sequence is KMSKS. ATP is bound at residue K596. The Zn(2+) site is built by C891, C894, C911, and C914.

This sequence belongs to the class-I aminoacyl-tRNA synthetase family. IleS type 1 subfamily. Monomer. It depends on Zn(2+) as a cofactor.

The protein resides in the cytoplasm. The enzyme catalyses tRNA(Ile) + L-isoleucine + ATP = L-isoleucyl-tRNA(Ile) + AMP + diphosphate. In terms of biological role, catalyzes the attachment of isoleucine to tRNA(Ile). As IleRS can inadvertently accommodate and process structurally similar amino acids such as valine, to avoid such errors it has two additional distinct tRNA(Ile)-dependent editing activities. One activity is designated as 'pretransfer' editing and involves the hydrolysis of activated Val-AMP. The other activity is designated 'posttransfer' editing and involves deacylation of mischarged Val-tRNA(Ile). This is Isoleucine--tRNA ligase from Geobacillus thermodenitrificans (strain NG80-2).